Here is a 474-residue protein sequence, read N- to C-terminus: MSKKLHIKTWGCQMNEYDSSKMADLLGEYQGYTLTEDASEADILLLNTCSIREKAQEKVFHQLGRWKTLKDKNPNLIIGVGGCVASQEGKAIKDRAQCVDIIFGPQTLHRLPDMIEQVRRGDKAVIDISFPEIEKFDRLPEPRAEGPTAFVSIMEGCSKYCSFCVVPYTRGEEVSRPLDDIILEIAQLAEQGVREVNLLGQNVNAYRGATHDGSICSFAELLRFVAAIDGIDRIRFTTSHPIEFTQDIIDVYEDTPELVSFLHLPVQSGSDRILTAMKRGHMAIEYKSIIRRLRKAREGIQISSDFIIGFPGETKEDFADTMKLIEEIGFDHSFSFIYSARPGTPAADLPDNVDMEEKKQRLAILQDRITQQAMRYSRHMMGTVQRILVEGPSVKNPMELRGRTENNRVVNFEGLPKHIGTFVDVEIVDVYTNSLRGKFIRGEDEMDLRRSLRPSDILAKHKQDDDLGVTQFKP.

Residues 3 to 120 (KKLHIKTWGC…LPDMIEQVRR (118 aa)) form the MTTase N-terminal domain. Residues Cys12, Cys49, Cys83, Cys157, Cys161, and Cys164 each contribute to the [4Fe-4S] cluster site. A Radical SAM core domain is found at 143–375 (RAEGPTAFVS…QDRITQQAMR (233 aa)). The TRAM domain occupies 378-441 (RHMMGTVQRI…TNSLRGKFIR (64 aa)).

Belongs to the methylthiotransferase family. MiaB subfamily. Monomer. The cofactor is [4Fe-4S] cluster.

The protein resides in the cytoplasm. It carries out the reaction N(6)-dimethylallyladenosine(37) in tRNA + (sulfur carrier)-SH + AH2 + 2 S-adenosyl-L-methionine = 2-methylsulfanyl-N(6)-dimethylallyladenosine(37) in tRNA + (sulfur carrier)-H + 5'-deoxyadenosine + L-methionine + A + S-adenosyl-L-homocysteine + 2 H(+). Its function is as follows. Catalyzes the methylthiolation of N6-(dimethylallyl)adenosine (i(6)A), leading to the formation of 2-methylthio-N6-(dimethylallyl)adenosine (ms(2)i(6)A) at position 37 in tRNAs that read codons beginning with uridine. The polypeptide is tRNA-2-methylthio-N(6)-dimethylallyladenosine synthase (Shewanella putrefaciens (strain CN-32 / ATCC BAA-453)).